The following is a 430-amino-acid chain: 3-phosphoshikimate 1-carboxyvinyltransferase (430 aa).

Positions 20, 21, and 25 each coordinate 3-phosphoshikimate. A phosphoenolpyruvate-binding site is contributed by Lys20. Phosphoenolpyruvate is bound by residues Gly92 and Arg120. Ser166, Gln168, Asp312, and Lys339 together coordinate 3-phosphoshikimate. A phosphoenolpyruvate-binding site is contributed by Gln168. The active-site Proton acceptor is the Asp312. Phosphoenolpyruvate contacts are provided by Arg343 and Arg387.

Belongs to the EPSP synthase family. As to quaternary structure, monomer.

Its subcellular location is the cytoplasm. It carries out the reaction 3-phosphoshikimate + phosphoenolpyruvate = 5-O-(1-carboxyvinyl)-3-phosphoshikimate + phosphate. The protein operates within metabolic intermediate biosynthesis; chorismate biosynthesis; chorismate from D-erythrose 4-phosphate and phosphoenolpyruvate: step 6/7. Functionally, catalyzes the transfer of the enolpyruvyl moiety of phosphoenolpyruvate (PEP) to the 5-hydroxyl of shikimate-3-phosphate (S3P) to produce enolpyruvyl shikimate-3-phosphate and inorganic phosphate. The chain is 3-phosphoshikimate 1-carboxyvinyltransferase from Lactococcus lactis subsp. cremoris (strain MG1363).